Reading from the N-terminus, the 322-residue chain is Homoserine kinase (322 aa).

107–117 contacts ATP; sequence PLSSGMGGSAA.

Belongs to the GHMP kinase family. Homoserine kinase subfamily.

It is found in the cytoplasm. It catalyses the reaction L-homoserine + ATP = O-phospho-L-homoserine + ADP + H(+). It participates in amino-acid biosynthesis; L-threonine biosynthesis; L-threonine from L-aspartate: step 4/5. Functionally, catalyzes the ATP-dependent phosphorylation of L-homoserine to L-homoserine phosphate. The protein is Homoserine kinase of Xylella fastidiosa (strain 9a5c).